The sequence spans 343 residues: MALVSSRATQDSKPSRERIVPVVYYLSRNGRLDHPHFIEVPLSSHNGLYLKDVINRLNDLRGNGMACLYSWSSKRTYKNGFVWYDLSDEDFIFPVHGQEYVLKGSQILDLDNNSGNFSAVTHRRNQSWSSVDHYKVYKASELNAEATRKLSMDASTQTDDRRRRKSPVDEVNEVTELSREEITSPPQSDSSPETLESLMRADGRLILLQEDQELNRTVEKMRPSAVLMQLISCGAMSFKKCGPTLMNGNTRSTAVRGTGNYRLERAEKELKSFGRVKLEEKEYFSGSLIDESSKKELVPALKRSSSYNIDRSSRMGLTKEKEGEELARANFIPRNPNSVVGQP.

The DIX-like oligomerization domain stretch occupies residues 18–109 (RIVPVVYYLS…YVLKGSQILD (92 aa)). The segment at 148–194 (RKLSMDASTQTDDRRRRKSPVDEVNEVTELSREEITSPPQSDSSPET) is disordered. Over residues 184–194 (SPPQSDSSPET) the composition is skewed to polar residues. Positions 233-234 (CG) match the Association to cell membranes motif.

The protein belongs to the SOSEKI family. In terms of assembly, homodimer. Forms long polymer filaments with other SOKs proteins polymers (e.g. SOK1, SOK2, SOK3 and SOK4) crucial for polar localization and biological activity. Binds to ANGUSTIFOLIA (AN). Expressed during embryogenesis and in roots.

It is found in the cell membrane. SOSEKI proteins (SOK1-5) locally interpret global polarity cues and can influence cell division orientation to coordinate cell polarization relative to body axes, probably by guiding ANGUSTIFOLIA (AN) polarized localization. Positive regulator of auxin (indole-3-acetic acid, IAA) biosynthesis and signaling pathway leading to the modulation of seedling growth, plant and inflorescence development. Negative regulator of stress responses (e.g. salinity and osmotic stress). The sequence is that of Protein SOSEKI 4 from Arabidopsis thaliana (Mouse-ear cress).